Consider the following 120-residue polypeptide: FK506-binding protein 1A (120 aa).

A PPIase FKBP-type domain is found at 26-114 (GDNVDVHYKG…IFETELVGIK (89 aa)).

The protein belongs to the FKBP-type PPIase family. FKBP1 subfamily.

It is found in the cytoplasm. It catalyses the reaction [protein]-peptidylproline (omega=180) = [protein]-peptidylproline (omega=0). Its function is as follows. PPIases accelerate the folding of proteins. It catalyzes the cis-trans isomerization of proline imidic peptide bonds in oligopeptides. The protein is FK506-binding protein 1A (fkr-2) of Neurospora crassa (strain ATCC 24698 / 74-OR23-1A / CBS 708.71 / DSM 1257 / FGSC 987).